The chain runs to 200 residues: ATP-dependent Clp protease proteolytic subunit (200 aa).

The active-site Nucleophile is the serine 101. Residue histidine 126 is part of the active site.

Belongs to the peptidase S14 family. Component of the chloroplastic Clp protease core complex.

The protein localises to the plastid. Its subcellular location is the chloroplast stroma. The catalysed reaction is Hydrolysis of proteins to small peptides in the presence of ATP and magnesium. alpha-casein is the usual test substrate. In the absence of ATP, only oligopeptides shorter than five residues are hydrolyzed (such as succinyl-Leu-Tyr-|-NHMec, and Leu-Tyr-Leu-|-Tyr-Trp, in which cleavage of the -Tyr-|-Leu- and -Tyr-|-Trp bonds also occurs).. Its function is as follows. Cleaves peptides in various proteins in a process that requires ATP hydrolysis. Has a chymotrypsin-like activity. Plays a major role in the degradation of misfolded proteins. This Ostreococcus tauri protein is ATP-dependent Clp protease proteolytic subunit.